The primary structure comprises 107 residues: Small polypeptide DEVIL 9 (107 aa).

Residues 1–12 are compositionally biased toward basic and acidic residues; it reads MDEKWRLSKKDA. Residues 1 to 79 are disordered; sequence MDEKWRLSKK…EKGSITQKYS (79 aa). A helical transmembrane segment spans residues 9 to 29; that stretch reads KKDALAASCSSSSTSSKSKFS. Low complexity predominate over residues 13-65; it reads LAASCSSSSTSSKSKFSRSFSTSASSSKAPAFVRSSSTKCSVPSSSSSSISRS. A required for DVL/RTFL small polypeptide activity region spans residues 73 to 104; that stretch reads SITQKYSSLAKEQKGRFYIMRRCVAMLVCWHK.

Belongs to the DVL/RTFL small polypeptides family.

It is found in the cell membrane. In terms of biological role, small polypeptide acting as a regulatory molecule which coordinates cellular responses required for differentiation, growth and development, probably by restricting polar cell proliferation in lateral organs and coordinating socket cell recruitment and differentiation at trichome sites. This is Small polypeptide DEVIL 9 from Arabidopsis thaliana (Mouse-ear cress).